The primary structure comprises 117 residues: Envelope glycoprotein J (117 aa).

A signal peptide spans 1-26 (MRSLLFVVGAWVAAAVTHLTPNAALA). The interval 26–64 (ATGTTPTVGANSTADPGTGANGTTVPAAGTPANSTTAAE) is disordered. Over residues 27–40 (TGTTPTVGANSTAD) the composition is skewed to polar residues. Residues 27-73 (TGTTPTVGANSTADPGTGANGTTVPAAGTPANSTTAAETPAPFPPVD) lie on the Extracellular side of the membrane. 3 N-linked (GlcNAc...) asparagine; by host glycosylation sites follow: asparagine 36, asparagine 46, and asparagine 58. A helical membrane pass occupies residues 74-94 (FALPVVIGGLCALTLAAMGAG). The Cytoplasmic portion of the chain corresponds to 95 to 117 (ALLHRCCRRAAARRRQRAAYVYA).

It belongs to the alphaherpesvirinae glycoprotein J family.

It localises to the host Golgi apparatus membrane. It is found in the host endoplasmic reticulum membrane. Its subcellular location is the host endosome membrane. Functionally, inhibits host cell apoptosis. Induces an increase in reactive oxygen species (ROS) in the host cell. The sequence is that of Envelope glycoprotein J (gJ) from Homo sapiens (Human).